The sequence spans 389 residues: Glutamate 5-kinase (389 aa).

Lys-16 provides a ligand contact to ATP. Substrate is bound by residues Ser-56, Asp-143, and Asn-155. 175 to 176 (SD) provides a ligand contact to ATP. The PUA domain maps to 281-358 (AGELHVDDGA…AEIEAILGYA (78 aa)).

The protein belongs to the glutamate 5-kinase family.

The protein localises to the cytoplasm. The catalysed reaction is L-glutamate + ATP = L-glutamyl 5-phosphate + ADP. The protein operates within amino-acid biosynthesis; L-proline biosynthesis; L-glutamate 5-semialdehyde from L-glutamate: step 1/2. Catalyzes the transfer of a phosphate group to glutamate to form L-glutamate 5-phosphate. The polypeptide is Glutamate 5-kinase (Rhizobium etli (strain CIAT 652)).